Consider the following 195-residue polypeptide: Pyridoxal 5'-phosphate synthase subunit PdxT (195 aa).

Position 55–57 (55–57) interacts with L-glutamine; that stretch reads GES. Catalysis depends on cysteine 84, which acts as the Nucleophile. Residues arginine 111 and 139 to 140 each bind L-glutamine; that span reads IR. Residues histidine 175 and glutamate 177 each act as charge relay system in the active site.

The protein belongs to the glutaminase PdxT/SNO family. In terms of assembly, in the presence of PdxS, forms a dodecamer of heterodimers. Only shows activity in the heterodimer.

It catalyses the reaction aldehydo-D-ribose 5-phosphate + D-glyceraldehyde 3-phosphate + L-glutamine = pyridoxal 5'-phosphate + L-glutamate + phosphate + 3 H2O + H(+). The catalysed reaction is L-glutamine + H2O = L-glutamate + NH4(+). It participates in cofactor biosynthesis; pyridoxal 5'-phosphate biosynthesis. Its function is as follows. Catalyzes the hydrolysis of glutamine to glutamate and ammonia as part of the biosynthesis of pyridoxal 5'-phosphate. The resulting ammonia molecule is channeled to the active site of PdxS. The protein is Pyridoxal 5'-phosphate synthase subunit PdxT of Methanosphaerula palustris (strain ATCC BAA-1556 / DSM 19958 / E1-9c).